A 128-amino-acid polypeptide reads, in one-letter code: Sm-like protein LSM1A (128 aa).

One can recognise a Sm domain in the interval Phe10 to Glu85.

The protein belongs to the snRNP Sm proteins family. As to quaternary structure, component of the heptameric LSM1-LSM7 complex that forms a seven-membered ring structure with a donut shape. The LSM subunits are arranged in the order LSM1, LSM2, LSM3, LSM6, LSM5, LSM7 and LSM4. LSM1A subunit interacts only with its two neighboring subunits, LSM2 and LSM4. In terms of tissue distribution, expressed in roots, leaves, stems, flowers and siliques.

The protein resides in the cytoplasm. It localises to the P-body. Functionally, component of the cytoplasmic LSM1-LSM7 complex which is involved in mRNA degradation by promoting decapping and leading to accurate 5'-3' mRNA decay. LSM1A and LSM1B are essential for the formation of the cytoplasmic LSM1-LSM7 complex which regulates developmental gene expression by the decapping of specific development-related transcripts. Required for P-body formation during heat stress. The chain is Sm-like protein LSM1A from Arabidopsis thaliana (Mouse-ear cress).